The following is a 666-amino-acid chain: Endogenous retrovirus group K member 6 Gag polyprotein (666 aa).

Gly-2 is lipidated: N-myristoyl glycine. A disordered region spans residues 165–264 (GKGPELVGPS…APPSRQGSKL (100 aa)). Residues 232 to 247 (GMPPAPQGRAPYPQPP) show a composition bias toward pro residues. 2 CCHC-type zinc fingers span residues 544 to 561 (RKCY…NCPV) and 580 to 597 (DLCP…QCRS). Residues 598-642 (KFDKNGQPLSGNEQRGQPQAPQQTGAFPIQPFVPQGFQGQQPPLS) form a disordered region. Over residues 604–622 (QPLSGNEQRGQPQAPQQTG) the composition is skewed to polar residues. Positions 624-640 (FPIQPFVPQGFQGQQPP) are enriched in low complexity.

Belongs to the beta type-B retroviral Gag protein family. HERV class-II K(HML-2) gag subfamily. Myristoylation is essential for retroviral assembly. Alteration of the glycine residue leads to a block in the budding of particles and an accumulation of Gag inside the cell. In terms of processing, specific enzymatic cleavages may yield mature proteins.

It localises to the cell membrane. In terms of biological role, the products of the Gag polyproteins of infectious retroviruses perform highly complex orchestrated tasks during the assembly, budding, maturation, and infection stages of the viral replication cycle. During viral assembly, the proteins form membrane associations and self-associations that ultimately result in budding of an immature virion from the infected cell. Gag precursors also function during viral assembly to selectively bind and package two plus strands of genomic RNA. Endogenous Gag proteins may have kept, lost or modified their original function during evolution. This Homo sapiens (Human) protein is Endogenous retrovirus group K member 6 Gag polyprotein (ERVK-6).